The primary structure comprises 37 residues: MVEPLLSGIVLGLIVVTLAGLFYAAYKQYKRPNELGG.

A helical membrane pass occupies residues 5–25; sequence LLSGIVLGLIVVTLAGLFYAA.

This sequence belongs to the PetG family. In terms of assembly, the 4 large subunits of the cytochrome b6-f complex are cytochrome b6, subunit IV (17 kDa polypeptide, PetD), cytochrome f and the Rieske protein, while the 4 small subunits are PetG, PetL, PetM and PetN. The complex functions as a dimer.

It is found in the cellular thylakoid membrane. Component of the cytochrome b6-f complex, which mediates electron transfer between photosystem II (PSII) and photosystem I (PSI), cyclic electron flow around PSI, and state transitions. PetG is required for either the stability or assembly of the cytochrome b6-f complex. The polypeptide is Cytochrome b6-f complex subunit 5 (Anabaena variabilis).